Here is a 504-residue protein sequence, read N- to C-terminus: MALWRSSDNTVYLPPPSVAKVVNTDDYVTRTGIYYYAGSSRLLTVGHPYFKVPVNGGRKQEIPKVSAYQYRVFRVSLPDPNKFGLPDPSLYNPDTQRLVWACIGVEIGRGQPLGVGVSGHPLYNRLDDTENSHFSSAVSTQDSRDNVSVDYKQTQLCIIGCVPAMGEHWAKGKACKSTQQGDCPPLELVNTAIEDGDMIDTGYGAMDFRTLQETKSEVPLDICQSVCKYPDYLQMSADVYGDSMFFCLRKEQLFARHFWNRGGMVGDTIPSELYIKGTDIRERPGTHVYSPSPSGSMVSSDSQLFNKPYWLHKAQGHNNGICWHNQLFITVVDTTRSTNFTLSACTETAIPAVYSPTKFKEYTRHVEEYDLQFIFQLCTITLTADVMAYIHTMNPAILDNWNIGVTPPPSASLVDTYRYLQSAAIACQKDAPTPEKKDPYDDLKFWNVDLKEKFSTELDQFPLGRKFLLQVGARRRPTIGPRKRPASAKSSSSASKHKRKRVSK.

Composition is skewed to basic residues over residues 474–486 (RRRP…KRPA) and 495–504 (SKHKRKRVSK). The segment at 474-504 (RRRPTIGPRKRPASAKSSSSASKHKRKRVSK) is disordered.

The protein belongs to the papillomaviridae L1 protein family. As to quaternary structure, self-assembles into homopentamers. The capsid has an icosahedral symmetry and consists of 72 capsomers, with each capsomer being a pentamer of L1. Interacts with the minor capsid protein L2; this interaction is necessary for viral genome encapsidation. Interacts with protein E2; this interaction enhances E2-dependent replication and transcription activation.

It localises to the virion. Its subcellular location is the host nucleus. Its function is as follows. Forms an icosahedral capsid with a T=7 symmetry and a 50 nm diameter. The capsid is composed of 72 pentamers linked to each other by disulfide bonds and associated with L2 proteins. Binds to heparan sulfate proteoglycans on cell surface of basal layer keratinocytes to provide initial virion attachment. This binding mediates a conformational change in the virus capsid that facilitates efficient infection. The virion enters the host cell via endocytosis. During virus trafficking, L1 protein dissociates from the viral DNA and the genomic DNA is released to the host nucleus. The virion assembly takes place within the cell nucleus. Encapsulates the genomic DNA together with protein L2. The polypeptide is Major capsid protein L1 (Homo sapiens (Human)).